We begin with the raw amino-acid sequence, 125 residues long: Calcitonin receptor-stimulating peptide 3 (125 aa).

An N-terminal signal peptide occupies residues 1–25 (MGFWKFPPFLILSILVLYQAGMLHA). A propeptide spanning residues 26–79 (APFRMALGSSFDSATLTEEEMSLLLVAMVKDYVQMKATVLEQETEDFSITTQER) is cleaved from the precursor. An intrachain disulfide couples Cys-81 to Cys-86. Leu-116 carries the post-translational modification Leucine amide. A propeptide spanning residues 122–125 (QPQA) is cleaved from the precursor.

This sequence belongs to the calcitonin family. In terms of tissue distribution, mainly expressed in the thyroid gland and CNS. Found in the nerve cells of cerebrum, hippocampus, hypothalamus, pons/midbrain and thalamus.

Its subcellular location is the secreted. This Sus scrofa (Pig) protein is Calcitonin receptor-stimulating peptide 3 (CRSP3).